The following is a 938-amino-acid chain: Isoleucine--tRNA ligase (938 aa).

Residues 58–68 (PYANGSIHIGH) carry the 'HIGH' region motif. E561 contributes to the L-isoleucyl-5'-AMP binding site. A 'KMSKS' region motif is present at residues 602–606 (KMSKS). ATP is bound at residue K605. Zn(2+) contacts are provided by C901, C904, C921, and C924.

Belongs to the class-I aminoacyl-tRNA synthetase family. IleS type 1 subfamily. Monomer. It depends on Zn(2+) as a cofactor.

The protein resides in the cytoplasm. The catalysed reaction is tRNA(Ile) + L-isoleucine + ATP = L-isoleucyl-tRNA(Ile) + AMP + diphosphate. Its function is as follows. Catalyzes the attachment of isoleucine to tRNA(Ile). As IleRS can inadvertently accommodate and process structurally similar amino acids such as valine, to avoid such errors it has two additional distinct tRNA(Ile)-dependent editing activities. One activity is designated as 'pretransfer' editing and involves the hydrolysis of activated Val-AMP. The other activity is designated 'posttransfer' editing and involves deacylation of mischarged Val-tRNA(Ile). In Serratia proteamaculans (strain 568), this protein is Isoleucine--tRNA ligase.